The following is a 201-amino-acid chain: Imidazole glycerol phosphate synthase subunit HisH (201 aa).

The region spanning 1 to 201 (MIAIIDYGAG…LLKRYEEMIR (201 aa)) is the Glutamine amidotransferase type-1 domain. Cys-79 acts as the Nucleophile in catalysis. Residues His-181 and Glu-183 contribute to the active site.

Heterodimer of HisH and HisF.

It is found in the cytoplasm. It carries out the reaction 5-[(5-phospho-1-deoxy-D-ribulos-1-ylimino)methylamino]-1-(5-phospho-beta-D-ribosyl)imidazole-4-carboxamide + L-glutamine = D-erythro-1-(imidazol-4-yl)glycerol 3-phosphate + 5-amino-1-(5-phospho-beta-D-ribosyl)imidazole-4-carboxamide + L-glutamate + H(+). The enzyme catalyses L-glutamine + H2O = L-glutamate + NH4(+). It participates in amino-acid biosynthesis; L-histidine biosynthesis; L-histidine from 5-phospho-alpha-D-ribose 1-diphosphate: step 5/9. IGPS catalyzes the conversion of PRFAR and glutamine to IGP, AICAR and glutamate. The HisH subunit catalyzes the hydrolysis of glutamine to glutamate and ammonia as part of the synthesis of IGP and AICAR. The resulting ammonia molecule is channeled to the active site of HisF. This chain is Imidazole glycerol phosphate synthase subunit HisH, found in Oceanobacillus iheyensis (strain DSM 14371 / CIP 107618 / JCM 11309 / KCTC 3954 / HTE831).